Here is a 133-residue protein sequence, read N- to C-terminus: NADPH-dependent 7-cyano-7-deazaguanine reductase (133 aa).

The active-site Thioimide intermediate is the C49. Residue D56 is the Proton donor of the active site. Substrate-binding positions include 71–73 and 90–91; these read IEL and HE.

It belongs to the GTP cyclohydrolase I family. QueF type 1 subfamily.

Its subcellular location is the cytoplasm. It carries out the reaction 7-aminomethyl-7-carbaguanine + 2 NADP(+) = 7-cyano-7-deazaguanine + 2 NADPH + 3 H(+). Its pathway is tRNA modification; tRNA-queuosine biosynthesis. Catalyzes the NADPH-dependent reduction of 7-cyano-7-deazaguanine (preQ0) to 7-aminomethyl-7-deazaguanine (preQ1). In Leptospira borgpetersenii serovar Hardjo-bovis (strain JB197), this protein is NADPH-dependent 7-cyano-7-deazaguanine reductase.